The sequence spans 51 residues: Large ribosomal subunit protein eL39 (51 aa).

Belongs to the eukaryotic ribosomal protein eL39 family.

This is Large ribosomal subunit protein eL39 from Methanosarcina acetivorans (strain ATCC 35395 / DSM 2834 / JCM 12185 / C2A).